Consider the following 189-residue polypeptide: Potassium-transporting ATPase KdpC subunit (189 aa).

The helical transmembrane segment at 6 to 26 (PAIMMVLVFTIICGGIYPAVV) threads the bilayer.

The protein belongs to the KdpC family. As to quaternary structure, the system is composed of three essential subunits: KdpA, KdpB and KdpC.

It localises to the cell inner membrane. In terms of biological role, part of the high-affinity ATP-driven potassium transport (or Kdp) system, which catalyzes the hydrolysis of ATP coupled with the electrogenic transport of potassium into the cytoplasm. This subunit acts as a catalytic chaperone that increases the ATP-binding affinity of the ATP-hydrolyzing subunit KdpB by the formation of a transient KdpB/KdpC/ATP ternary complex. This chain is Potassium-transporting ATPase KdpC subunit, found in Geobacter metallireducens (strain ATCC 53774 / DSM 7210 / GS-15).